The sequence spans 114 residues: Large ribosomal subunit protein bL17 (114 aa).

This sequence belongs to the bacterial ribosomal protein bL17 family. As to quaternary structure, part of the 50S ribosomal subunit. Contacts protein L32.

The chain is Large ribosomal subunit protein bL17 from Halothermothrix orenii (strain H 168 / OCM 544 / DSM 9562).